The following is a 79-amino-acid chain: UPF0291 protein lp_2062 (79 aa).

It belongs to the UPF0291 family.

The protein resides in the cytoplasm. The chain is UPF0291 protein lp_2062 from Lactiplantibacillus plantarum (strain ATCC BAA-793 / NCIMB 8826 / WCFS1) (Lactobacillus plantarum).